Here is a 115-residue protein sequence, read N- to C-terminus: Phosphoribosyl-AMP cyclohydrolase (115 aa).

Position 80 (Asp-80) interacts with Mg(2+). Cys-81 provides a ligand contact to Zn(2+). Mg(2+)-binding residues include Asp-82 and Asp-84. 2 residues coordinate Zn(2+): Cys-97 and Cys-104.

Belongs to the PRA-CH family. In terms of assembly, homodimer. It depends on Mg(2+) as a cofactor. Requires Zn(2+) as cofactor.

The protein localises to the cytoplasm. The catalysed reaction is 1-(5-phospho-beta-D-ribosyl)-5'-AMP + H2O = 1-(5-phospho-beta-D-ribosyl)-5-[(5-phospho-beta-D-ribosylamino)methylideneamino]imidazole-4-carboxamide. The protein operates within amino-acid biosynthesis; L-histidine biosynthesis; L-histidine from 5-phospho-alpha-D-ribose 1-diphosphate: step 3/9. Its function is as follows. Catalyzes the hydrolysis of the adenine ring of phosphoribosyl-AMP. The chain is Phosphoribosyl-AMP cyclohydrolase from Mycolicibacterium paratuberculosis (strain ATCC BAA-968 / K-10) (Mycobacterium paratuberculosis).